The following is a 361-amino-acid chain: Transcription factor TCP10 (361 aa).

Residues 29–87 (RKDRHSKVFTSKGPRDRRVRLSAHTAIQFYDVQDRLGYDRPSKAVDWLIKKAKTAIDKL) enclose the TCP domain. Disordered stretches follow at residues 220–259 (DLTM…QPSM) and 295–317 (SWDH…SMFA). The segment covering 295-304 (SWDHHQTTSD) has biased composition (basic and acidic residues).

Interacts with AHP1, AHP2 and AHP3. Interacts with SPL. As to expression, mostly detected in lateral organs, such as leaves and flowers. Expressed in cotyledons, particularly in the vascular region, in leaves, roots, stems, buds, flowers and immature siliques.

It is found in the nucleus. Functionally, plays a pivotal role in the control of morphogenesis of shoot organs by negatively regulating the expression of boundary-specific genes such as CUC genes, probably through the induction of miRNA (e.g. miR164). Participates in ovule development. The sequence is that of Transcription factor TCP10 (TCP10) from Arabidopsis thaliana (Mouse-ear cress).